We begin with the raw amino-acid sequence, 142 residues long: Putative mating-type transcription factor (142 aa).

The protein resides in the nucleus. This is Putative mating-type transcription factor from Eremothecium gossypii (strain ATCC 10895 / CBS 109.51 / FGSC 9923 / NRRL Y-1056) (Yeast).